The sequence spans 113 residues: MTTKLERRIKIKYRVRNKISGTTERPRMSVFRSNKQIYVQVIDDLSGRTLAAASSLGMEAMPKKEQAAKVGELIAKKAQEAGITTVVFDRNGYLYHGRIKEVADAARNGGLKF.

It belongs to the universal ribosomal protein uL18 family. Part of the 50S ribosomal subunit; part of the 5S rRNA/L5/L18/L25 subcomplex. Contacts the 5S and 23S rRNAs.

This is one of the proteins that bind and probably mediate the attachment of the 5S RNA into the large ribosomal subunit, where it forms part of the central protuberance. The chain is Large ribosomal subunit protein uL18 from Phocaeicola vulgatus (strain ATCC 8482 / DSM 1447 / JCM 5826 / CCUG 4940 / NBRC 14291 / NCTC 11154) (Bacteroides vulgatus).